Reading from the N-terminus, the 198-residue chain is Ribonuclease HII (198 aa).

The RNase H type-2 domain maps to 5–195 (LRVAGVDEAG…VKAWLASHQG (191 aa)). A divalent metal cation contacts are provided by D11, E12, and D103.

It belongs to the RNase HII family. Requires Mn(2+) as cofactor. Mg(2+) is required as a cofactor.

The protein localises to the cytoplasm. It catalyses the reaction Endonucleolytic cleavage to 5'-phosphomonoester.. Its function is as follows. Endonuclease that specifically degrades the RNA of RNA-DNA hybrids. The sequence is that of Ribonuclease HII from Chromobacterium violaceum (strain ATCC 12472 / DSM 30191 / JCM 1249 / CCUG 213 / NBRC 12614 / NCIMB 9131 / NCTC 9757 / MK).